Consider the following 72-residue polypeptide: UPF0346 protein GK1571 (72 aa).

The protein belongs to the UPF0346 family.

The polypeptide is UPF0346 protein GK1571 (Geobacillus kaustophilus (strain HTA426)).